We begin with the raw amino-acid sequence, 514 residues long: 2,3-bisphosphoglycerate-independent phosphoglycerate mutase (514 aa).

Residues Asp14 and Ser64 each coordinate Mn(2+). Ser64 functions as the Phosphoserine intermediate in the catalytic mechanism. Residues His125, 155-156 (RD), Arg187, Arg193, 263-266 (RADR), and Lys336 each bind substrate. The Mn(2+) site is built by Asp403, His407, Asp444, His445, and His463.

This sequence belongs to the BPG-independent phosphoglycerate mutase family. As to quaternary structure, monomer. Mn(2+) serves as cofactor.

It catalyses the reaction (2R)-2-phosphoglycerate = (2R)-3-phosphoglycerate. It participates in carbohydrate degradation; glycolysis; pyruvate from D-glyceraldehyde 3-phosphate: step 3/5. Catalyzes the interconversion of 2-phosphoglycerate and 3-phosphoglycerate. In Shewanella halifaxensis (strain HAW-EB4), this protein is 2,3-bisphosphoglycerate-independent phosphoglycerate mutase.